The primary structure comprises 433 residues: Trigger factor (433 aa).

Residues 161–246 (EDRATIDFTG…LKKVEERELP (86 aa)) form the PPIase FKBP-type domain.

This sequence belongs to the FKBP-type PPIase family. Tig subfamily.

It localises to the cytoplasm. It catalyses the reaction [protein]-peptidylproline (omega=180) = [protein]-peptidylproline (omega=0). Its function is as follows. Involved in protein export. Acts as a chaperone by maintaining the newly synthesized protein in an open conformation. Functions as a peptidyl-prolyl cis-trans isomerase. The chain is Trigger factor from Edwardsiella ictaluri (strain 93-146).